The following is a 1107-amino-acid chain: Lon protease homolog, mitochondrial (1107 aa).

A mitochondrion-targeting transit peptide spans 1–31 (MLSRQRIPRILASRTSLAHSIRSFTSTTSSI). Disordered regions lie at residues 32 to 152 (RPVA…PGDK) and 273 to 329 (PEAA…PYEP). Residues 51–60 (TNLSSFSTYT) are compositionally biased toward polar residues. A compositionally biased stretch (basic and acidic residues) spans 80-101 (EEERKANVEHAEAEAKEAESKQ). The span at 122 to 141 (GAAGGSSAGSGSGADGGSGD) shows a compositional bias: gly residues. The segment covering 142–152 (GGKRGRKPGDK) has biased composition (basic and acidic residues). The Lon N-terminal domain maps to 166–441 (VMAIPIAKRP…KALLVLKKEH (276 aa)). 594–601 (GPPGVGKT) is a binding site for ATP. The interval 808–858 (PESEALTEEGKAAQEETEKKKSEEAASGETSSPKAATEASEKETTEKPRVA) is disordered. Over residues 815-831 (EEGKAAQEETEKKKSEE) the composition is skewed to basic and acidic residues. The span at 832-845 (AASGETSSPKAATE) shows a compositional bias: low complexity. Over residues 846 to 856 (ASEKETTEKPR) the composition is skewed to basic and acidic residues. Residues 891-1077 (VTPPGVTMGL…SEVFDLIFPK (187 aa)) enclose the Lon proteolytic domain. Catalysis depends on residues S983 and K1026. The interval 1085-1107 (KSRIIEDDKSEKEESKKKNDDDE) is disordered.

The protein belongs to the peptidase S16 family. Homohexamer or homoheptamer. Organized in a ring with a central cavity.

It is found in the mitochondrion matrix. The catalysed reaction is Hydrolysis of proteins in presence of ATP.. Functionally, ATP-dependent serine protease that mediates the selective degradation of misfolded, unassembled or oxidatively damaged polypeptides as well as certain short-lived regulatory proteins in the mitochondrial matrix. May also have a chaperone function in the assembly of inner membrane protein complexes. Participates in the regulation of mitochondrial gene expression and in the maintenance of the integrity of the mitochondrial genome. Binds to mitochondrial DNA in a site-specific manner. This Neurospora crassa (strain ATCC 24698 / 74-OR23-1A / CBS 708.71 / DSM 1257 / FGSC 987) protein is Lon protease homolog, mitochondrial (pim1).